A 324-amino-acid chain; its full sequence is tRNA dimethylallyltransferase (324 aa).

Residue 17–24 participates in ATP binding; the sequence is GPTASGKT. 19–24 serves as a coordination point for substrate; that stretch reads TASGKT. Interaction with substrate tRNA regions lie at residues 42-45, 166-170, 251-256, and 284-291; these read DSAL, QRIQR, RCVGYR, and KRQITWLR.

The protein belongs to the IPP transferase family. Monomer. Mg(2+) is required as a cofactor.

It catalyses the reaction adenosine(37) in tRNA + dimethylallyl diphosphate = N(6)-dimethylallyladenosine(37) in tRNA + diphosphate. In terms of biological role, catalyzes the transfer of a dimethylallyl group onto the adenine at position 37 in tRNAs that read codons beginning with uridine, leading to the formation of N6-(dimethylallyl)adenosine (i(6)A). This chain is tRNA dimethylallyltransferase, found in Burkholderia orbicola (strain MC0-3).